The chain runs to 176 residues: MTRQESYNFDELLLSGHGRLFGPGNPQLPAPQMLMFHRITQMSEEGGAYDKGQVIAELDLDPDLWFFRCHFPGDPVMPGCLGLDALWQLVGFYLGWIGGSGKGRALGCGEVKFSGQILPEHKKVTYEIAFKRVINRRLVMGIADGWVSVDGEQIYTAKDLKVGLFQDPGDLSRSQG.

Residue His70 is part of the active site.

The protein belongs to the thioester dehydratase family. FabA subfamily. As to quaternary structure, homodimer.

It is found in the cytoplasm. It catalyses the reaction a (3R)-hydroxyacyl-[ACP] = a (2E)-enoyl-[ACP] + H2O. The catalysed reaction is (3R)-hydroxydecanoyl-[ACP] = (2E)-decenoyl-[ACP] + H2O. The enzyme catalyses (2E)-decenoyl-[ACP] = (3Z)-decenoyl-[ACP]. Its pathway is lipid metabolism; fatty acid biosynthesis. Necessary for the introduction of cis unsaturation into fatty acids. Catalyzes the dehydration of (3R)-3-hydroxydecanoyl-ACP to E-(2)-decenoyl-ACP and then its isomerization to Z-(3)-decenoyl-ACP. Can catalyze the dehydratase reaction for beta-hydroxyacyl-ACPs with saturated chain lengths up to 16:0, being most active on intermediate chain length. The protein is 3-hydroxydecanoyl-[acyl-carrier-protein] dehydratase of Alkalilimnicola ehrlichii (strain ATCC BAA-1101 / DSM 17681 / MLHE-1).